A 623-amino-acid polypeptide reads, in one-letter code: Chaperone protein DnaK (623 aa).

Thr197 is modified (phosphothreonine; by autocatalysis). The span at 595 to 615 shows a compositional bias: basic and acidic residues; the sequence is AENMYKKDEPNTANDKKKKDD. Residues 595-623 form a disordered region; it reads AENMYKKDEPNTANDKKKKDDDVIDAEVE.

This sequence belongs to the heat shock protein 70 family.

Functionally, acts as a chaperone. This chain is Chaperone protein DnaK, found in Campylobacter jejuni subsp. doylei (strain ATCC BAA-1458 / RM4099 / 269.97).